A 152-amino-acid polypeptide reads, in one-letter code: MMKKIDVKILDPRVGQQFPLPTYATSGSAGLDLRACLDDAVELAPGATTLVPTGLAIHIADPSLAAVMLPRSGLGHKHGIVLGNLVGLIDSDYQGQLMVSIWNRGQDSFTIEPGERIAQMVFVPVVQAEFNLVEEFEATDRGEGGFGHSGRK.

Substrate is bound by residues 71-73 (RSG), asparagine 84, 88-90 (LID), and methionine 98.

The protein belongs to the dUTPase family. Mg(2+) serves as cofactor.

The enzyme catalyses dUTP + H2O = dUMP + diphosphate + H(+). It functions in the pathway pyrimidine metabolism; dUMP biosynthesis; dUMP from dCTP (dUTP route): step 2/2. Functionally, this enzyme is involved in nucleotide metabolism: it produces dUMP, the immediate precursor of thymidine nucleotides and it decreases the intracellular concentration of dUTP so that uracil cannot be incorporated into DNA. In Citrobacter koseri (strain ATCC BAA-895 / CDC 4225-83 / SGSC4696), this protein is Deoxyuridine 5'-triphosphate nucleotidohydrolase.